Here is a 389-residue protein sequence, read N- to C-terminus: Phospho-N-acetylmuramoyl-pentapeptide-transferase (389 aa).

10 helical membrane passes run 25 to 45 (RAVM…PAVI), 73 to 93 (TMGG…WADL), 97 to 117 (FIWI…VDDY), 135 to 155 (FWQS…VSEA), 190 to 210 (ISYP…IVGA), 222 to 242 (GLVI…AYVM), 259 to 279 (AGEL…FLWF), 287 to 307 (FMGD…AVIV), 311 to 331 (IVLF…MLQV), and 366 to 386 (QVVV…LSTL).

This sequence belongs to the glycosyltransferase 4 family. MraY subfamily. Requires Mg(2+) as cofactor.

It is found in the cell inner membrane. The enzyme catalyses UDP-N-acetyl-alpha-D-muramoyl-L-alanyl-gamma-D-glutamyl-meso-2,6-diaminopimeloyl-D-alanyl-D-alanine + di-trans,octa-cis-undecaprenyl phosphate = di-trans,octa-cis-undecaprenyl diphospho-N-acetyl-alpha-D-muramoyl-L-alanyl-D-glutamyl-meso-2,6-diaminopimeloyl-D-alanyl-D-alanine + UMP. It participates in cell wall biogenesis; peptidoglycan biosynthesis. Catalyzes the initial step of the lipid cycle reactions in the biosynthesis of the cell wall peptidoglycan: transfers peptidoglycan precursor phospho-MurNAc-pentapeptide from UDP-MurNAc-pentapeptide onto the lipid carrier undecaprenyl phosphate, yielding undecaprenyl-pyrophosphoryl-MurNAc-pentapeptide, known as lipid I. This is Phospho-N-acetylmuramoyl-pentapeptide-transferase from Paraburkholderia xenovorans (strain LB400).